Reading from the N-terminus, the 213-residue chain is Kynurenine formamidase (213 aa).

W18 contacts substrate. Zn(2+) contacts are provided by H48, H52, and D54. The Proton donor/acceptor role is filled by H58. Residues H160 and E172 each coordinate Zn(2+).

This sequence belongs to the Cyclase 1 superfamily. KynB family. In terms of assembly, homodimer. Zn(2+) serves as cofactor.

The enzyme catalyses N-formyl-L-kynurenine + H2O = L-kynurenine + formate + H(+). The protein operates within amino-acid degradation; L-tryptophan degradation via kynurenine pathway; L-kynurenine from L-tryptophan: step 2/2. In terms of biological role, catalyzes the hydrolysis of N-formyl-L-kynurenine to L-kynurenine, the second step in the kynurenine pathway of tryptophan degradation. The protein is Kynurenine formamidase of Burkholderia multivorans (strain ATCC 17616 / 249).